The chain runs to 60 residues: Large ribosomal subunit protein uL30 (60 aa).

It belongs to the universal ribosomal protein uL30 family. In terms of assembly, part of the 50S ribosomal subunit.

The protein is Large ribosomal subunit protein uL30 of Finegoldia magna (strain ATCC 29328 / DSM 20472 / WAL 2508) (Peptostreptococcus magnus).